The chain runs to 389 residues: uncharacterized protein (389 aa).

It belongs to the mimivirus L17x/L18x family.

This is an uncharacterized protein from Acanthamoeba polyphaga mimivirus (APMV).